We begin with the raw amino-acid sequence, 189 residues long: Probable nicotinate-nucleotide adenylyltransferase (189 aa).

The protein belongs to the NadD family.

It carries out the reaction nicotinate beta-D-ribonucleotide + ATP + H(+) = deamido-NAD(+) + diphosphate. It functions in the pathway cofactor biosynthesis; NAD(+) biosynthesis; deamido-NAD(+) from nicotinate D-ribonucleotide: step 1/1. Functionally, catalyzes the reversible adenylation of nicotinate mononucleotide (NaMN) to nicotinic acid adenine dinucleotide (NaAD). This chain is Probable nicotinate-nucleotide adenylyltransferase, found in Staphylococcus aureus (strain bovine RF122 / ET3-1).